Here is a 235-residue protein sequence, read N- to C-terminus: Sperm-associated microtubule inner protein 5 (235 aa).

In terms of assembly, microtubule inner protein component of sperm flagellar doublet microtubules. In terms of tissue distribution, expressed in sperm.

It localises to the cytoplasm. The protein resides in the cytoskeleton. Its subcellular location is the flagellum axoneme. It is found in the nucleus. Microtubule inner protein (MIP) part of the dynein-decorated doublet microtubules (DMTs) in flagellum axoneme. May serve to reinforce and thus stabilize the microtubule structure in the sperm flagella. The polypeptide is Sperm-associated microtubule inner protein 5 (SPMIP5) (Bos taurus (Bovine)).